We begin with the raw amino-acid sequence, 92 residues long: Evasin P942 (92 aa).

The N-terminal stretch at 1–26 (MEVKTFAFLQIAVLIALGLHLAPAGS) is a signal peptide. Cystine bridges form between Cys44-Cys63, Cys48-Cys65, and Cys59-Cys76. Residue Asn47 is glycosylated (N-linked (GlcNAc...) asparagine). N-linked (GlcNAc...) asparagine glycosylation is present at Asn70.

The protein localises to the secreted. Functionally, salivary chemokine-binding protein which binds to host chemokines CXCL1, CXCL2, CXCL3, CXCL4, CXCL5, CXCL6, CXCL10, CXCL11 and CXCL13. The chain is Evasin P942 from Ixodes ricinus (Common tick).